Here is a 476-residue protein sequence, read N- to C-terminus: Sulfate adenylyltransferase subunit 1 (476 aa).

Positions Lys-24–Glu-239 constitute a tr-type G domain. Residues Gly-33–Ser-40 form a G1 region. Residue Gly-33–Ser-40 coordinates GTP. The tract at residues Gly-91 to Asp-95 is G2. A G3 region spans residues Asp-112–Gly-115. GTP contacts are provided by residues Asp-112 to His-116 and Asn-167 to Asp-170. Residues Asn-167 to Asp-170 are G4. Residues Ser-205–Leu-207 are G5.

The protein belongs to the TRAFAC class translation factor GTPase superfamily. Classic translation factor GTPase family. CysN/NodQ subfamily. In terms of assembly, heterodimer composed of CysD, the smaller subunit, and CysN.

The enzyme catalyses sulfate + ATP + H(+) = adenosine 5'-phosphosulfate + diphosphate. It participates in sulfur metabolism; hydrogen sulfide biosynthesis; sulfite from sulfate: step 1/3. Its function is as follows. With CysD forms the ATP sulfurylase (ATPS) that catalyzes the adenylation of sulfate producing adenosine 5'-phosphosulfate (APS) and diphosphate, the first enzymatic step in sulfur assimilation pathway. APS synthesis involves the formation of a high-energy phosphoric-sulfuric acid anhydride bond driven by GTP hydrolysis by CysN coupled to ATP hydrolysis by CysD. This is Sulfate adenylyltransferase subunit 1 from Vibrio campbellii (strain ATCC BAA-1116).